Here is a 602-residue protein sequence, read N- to C-terminus: DNA mismatch repair protein MutL (602 aa).

This sequence belongs to the DNA mismatch repair MutL/HexB family.

Its function is as follows. This protein is involved in the repair of mismatches in DNA. It is required for dam-dependent methyl-directed DNA mismatch repair. May act as a 'molecular matchmaker', a protein that promotes the formation of a stable complex between two or more DNA-binding proteins in an ATP-dependent manner without itself being part of a final effector complex. The chain is DNA mismatch repair protein MutL from Geotalea uraniireducens (strain Rf4) (Geobacter uraniireducens).